Reading from the N-terminus, the 238-residue chain is Flagellar L-ring protein (238 aa).

An N-terminal signal peptide occupies residues 1–23 (MVKLFSYKIKYYLTAFFIIIIQS). Cysteine 24 carries N-palmitoyl cysteine lipidation. A lipid anchor (S-diacylglycerol cysteine) is attached at cysteine 24.

This sequence belongs to the FlgH family. The basal body constitutes a major portion of the flagellar organelle and consists of four rings (L,P,S, and M) mounted on a central rod.

The protein localises to the cell outer membrane. It localises to the bacterial flagellum basal body. Assembles around the rod to form the L-ring and probably protects the motor/basal body from shearing forces during rotation. The protein is Flagellar L-ring protein of Buchnera aphidicola subsp. Schizaphis graminum (strain Sg).